We begin with the raw amino-acid sequence, 26 residues long: Dermaseptin-J4 (26 aa).

V26 carries the post-translational modification Valine amide.

As to expression, expressed by the skin glands.

It localises to the secreted. Its function is as follows. Has antimicrobial activity. The protein is Dermaseptin-J4 of Phasmahyla jandaia (Jandaia leaf frog).